Reading from the N-terminus, the 215-residue chain is Sec-independent protein translocase protein TatB (215 aa).

Residues methionine 1–glycine 21 form a helical membrane-spanning segment. 2 disordered regions span residues aspartate 95–asparagine 119 and alanine 138–alanine 215. Positions glutamine 145–glutamate 157 are enriched in basic and acidic residues. Residues serine 203–alanine 215 show a composition bias toward basic residues.

The protein belongs to the TatB family. As to quaternary structure, the Tat system comprises two distinct complexes: a TatABC complex, containing multiple copies of TatA, TatB and TatC subunits, and a separate TatA complex, containing only TatA subunits. Substrates initially bind to the TatABC complex, which probably triggers association of the separate TatA complex to form the active translocon.

The protein localises to the cell inner membrane. Part of the twin-arginine translocation (Tat) system that transports large folded proteins containing a characteristic twin-arginine motif in their signal peptide across membranes. Together with TatC, TatB is part of a receptor directly interacting with Tat signal peptides. TatB may form an oligomeric binding site that transiently accommodates folded Tat precursor proteins before their translocation. The chain is Sec-independent protein translocase protein TatB from Rhizobium meliloti (strain 1021) (Ensifer meliloti).